A 273-amino-acid chain; its full sequence is Nucleotide-binding protein TT_C1664 (273 aa).

8-15 (GLSGAGKT) contacts ATP. 57–60 (DARA) is a binding site for GTP.

It belongs to the RapZ-like family.

Its function is as follows. Displays ATPase and GTPase activities. The polypeptide is Nucleotide-binding protein TT_C1664 (Thermus thermophilus (strain ATCC BAA-163 / DSM 7039 / HB27)).